Consider the following 586-residue polypeptide: Putative butyrophilin subfamily 2 member A3 (586 aa).

The first 27 residues, 1 to 27 (MEPAAALHFSRPASLLLLLSLCALVSA), serve as a signal peptide directing secretion. The region spanning 28–139 (QVTVVGPTDP…SCNEAILHLV (112 aa)) is the Ig-like V-type domain. Residues 28–246 (QVTVVGPTDP…SFMPSRSPCV (219 aa)) lie on the Extracellular side of the membrane. 4 N-linked (GlcNAc...) asparagine glycosylation sites follow: asparagine 45, asparagine 112, asparagine 214, and asparagine 220. A disulfide bridge connects residues cysteine 50 and cysteine 123. A helical transmembrane segment spans residues 247–267 (VILPVIMIILMIPIAICIYWI). Topologically, residues 268 to 586 (NNLQKEKKDS…VPQLPARKKV (319 aa)) are cytoplasmic. Positions 281 to 474 (TFNLCLSLAG…ILICSAFTGA (194 aa)) constitute a B30.2/SPRY domain.

It belongs to the immunoglobulin superfamily. BTN/MOG family.

The protein resides in the membrane. The protein is Putative butyrophilin subfamily 2 member A3 (BTN2A3P) of Homo sapiens (Human).